Reading from the N-terminus, the 146-residue chain is Protein phosphatase 1 regulatory subunit 14D (146 aa).

Over residues 1-16 the composition is skewed to polar residues; that stretch reads MLSSSAASCTSPNPDT. The disordered stretch occupies residues 1 to 57; that stretch reads MLSSSAASCTSPNPDTDNPDKKVRWSSEKRRRASSTDSESKTHLDISKLPRSRRPSR. Basic and acidic residues-rich tracts occupy residues 18–28 and 38–48; these read NPDKKVRWSSE and SESKTHLDISK. Positions 21–25 are interaction with protein phosphatase 1; sequence KKVRW.

This sequence belongs to the PP1 inhibitor family. Post-translationally, phosphorylated on several residues.

The protein localises to the cytoplasm. Its function is as follows. Inhibitor of PPP1CA. Has inhibitory activity only when phosphorylated, creating a molecular switch for regulating the phosphorylation status of PPP1CA substrates and smooth muscle contraction. The chain is Protein phosphatase 1 regulatory subunit 14D (Ppp1r14d) from Rattus norvegicus (Rat).